A 300-amino-acid chain; its full sequence is E3 ubiquitin-protein ligase RNF212B (300 aa).

An RING-type zinc finger spans residues 6-40 (CNQCFRKDGAHFFVTSCGHIFCKKCVTLEKCAVCG). Positions 87–124 (LLIAFYKHRITKLETAMQEAQQALVSQDKELSVLRKEN) form a coiled coil. Residues 141 to 232 (YQGSRSITPR…SYRTSSASSG (92 aa)) form a disordered region. Residues 155–165 (TSPSQSVTPRP) show a composition bias toward polar residues. Low complexity predominate over residues 166–182 (SFQHSSQVVSRSSSAES). Positions 191–200 (GSLGQGGRGL) are enriched in gly residues. The segment covering 211-232 (NETPSPASTHSLSYRTSSASSG) has biased composition (polar residues).

As to quaternary structure, homodimer. Autoubiquitinated.

It is found in the chromosome. It carries out the reaction S-ubiquitinyl-[E2 ubiquitin-conjugating enzyme]-L-cysteine + [acceptor protein]-L-lysine = [E2 ubiquitin-conjugating enzyme]-L-cysteine + N(6)-ubiquitinyl-[acceptor protein]-L-lysine.. It participates in protein modification; protein ubiquitination. Its function is as follows. Ubiquitin E3 ligase that acts as a crucial factor for crossing-over (CO) formation during meiosis. Essential for normal prophase I progression and for ensuring appropriate CO designation in meiosis. Recruits key components of the cross-over machinery either directly ou indirectly, leading to the activation of the MutL-gamma complex. The function of RNF212B in CO designation is dependent on its catalytic activity. The polypeptide is E3 ubiquitin-protein ligase RNF212B (RNF212B) (Homo sapiens (Human)).